A 628-amino-acid polypeptide reads, in one-letter code: tRNA (carboxymethyluridine(34)-5-O)-methyltransferase alkbh8 (628 aa).

In terms of domain architecture, RRM spans 43–123 (QSLVVANGGL…ITLYLSFVEK (81 aa)). One can recognise a Fe2OG dioxygenase domain in the interval 218-335 (DPDQLTINQY…RTSFTFRKVR (118 aa)). 225–227 (NQY) is a binding site for 2-oxoglutarate. Fe cation-binding residues include His-236 and Asp-238. Zn(2+) is bound at residue His-240. A Fe cation-binding site is contributed by His-290. Residues Arg-326 and Arg-332 each coordinate 2-oxoglutarate. The Zn(2+) site is built by Cys-339, Cys-341, and Cys-347. The interval 410-628 (ADVGCGNGKY…GNWCVILEKL (219 aa)) is methyltransferase domain. A disordered region spans residues 563–582 (PTNKSKVTPENKEQNEKEHG). Residues 569–582 (VTPENKEQNEKEHG) are compositionally biased toward basic and acidic residues.

It belongs to the alkB family. The cofactor is Fe(2+).

Its subcellular location is the cytoplasm. It is found in the nucleus. The catalysed reaction is 5-(carboxymethyl)uridine(34) in tRNA + S-adenosyl-L-methionine = 5-(2-methoxy-2-oxoethyl)uridine(34) in tRNA + S-adenosyl-L-homocysteine. Its function is as follows. Catalyzes the methylation of 5-carboxymethyl uridine to 5-methylcarboxymethyl uridine at the wobble position of the anticodon loop in tRNA via its methyltransferase domain. Catalyzes the last step in the formation of 5-methylcarboxymethyl uridine at the wobble position of the anticodon loop in target tRNA. Has a preference for tRNA(Arg) and tRNA(Glu), and does not bind tRNA(Lys). Binds tRNA and catalyzes the iron and alpha-ketoglutarate dependent hydroxylation of 5-methylcarboxymethyl uridine at the wobble position of the anticodon loop in tRNA via its dioxygenase domain, giving rise to 5-(S)-methoxycarbonylhydroxymethyluridine; has a preference for tRNA(Gly). Required for normal survival after DNA damage. May inhibit apoptosis and promote cell survival and angiogenesis. This is tRNA (carboxymethyluridine(34)-5-O)-methyltransferase alkbh8 (alkbh8) from Xenopus tropicalis (Western clawed frog).